The chain runs to 682 residues: MPDRSTKATMGAEDIHERKVSMEPRDSHQDAQPRGMFQNIKFFVLCHSILQLAQLMISGYLKSSISTVEKRFGLSSQTSGLLAAFNEVGNISLILFVSYFGSRVHRPRMIGCGAILVAVAGLLMALPHFISEPYRYDHSSPDRSQDFEASLCLPTTMAPASALSNDSCSSRTETKHLTMVGIMFTAQTLLGIGGVPIQPFGISYIDDFAHHSNSPLYLGILFAITMMGPGLAYGLGSLMLRLYVDIDRMPEGGINLTTKDPRWVGAWWLGFLISAGLVVLAASPYFFFPREMPKEKYELHFRQKVLAGGASIGSKGEELSSQHEPLKKQAGLPQIAPDLTVVQFIKVFPRVLLRTLRHPIFLLVVLSQVCTSSMVAGTATFLPKFLERQFSITASFANLLLGCLTIPLAIVGIVVGGVLVKRLHLSPMQCSALCLLGSLLCLLLSLPLFFIGCSTHHIAGITQDLGAQPGPSLFPGCSEPCSCQSDDFNPVCDTSAYVEYTTPCHAGCTGRVVQEALDKSQVFYTNCSCVAGNGTISAGSCESACSRLVLPFILLISLGAAVASITHTPSFMLILRGVKKEDKTLAVGMQFMLLRVLAWMPSPVIHGSAIDTTCVHWALTCGRRAVCRYYDHDLLRNRFIGLQFFFKSGSLVCFALVLAILRQQSREASTKATVKSSDLQEL.

The disordered stretch occupies residues 1–30; that stretch reads MPDRSTKATMGAEDIHERKVSMEPRDSHQD. Residues 1 to 41 lie on the Cytoplasmic side of the membrane; it reads MPDRSTKATMGAEDIHERKVSMEPRDSHQDAQPRGMFQNIK. A compositionally biased stretch (basic and acidic residues) spans 13–30; it reads EDIHERKVSMEPRDSHQD. Phosphoserine is present on S21. Residues 42–61 form a helical membrane-spanning segment; sequence FFVLCHSILQLAQLMISGYL. The Extracellular segment spans residues 62 to 80; sequence KSSISTVEKRFGLSSQTSG. A helical transmembrane segment spans residues 81-101; it reads LLAAFNEVGNISLILFVSYFG. Residues 102–107 lie on the Cytoplasmic side of the membrane; sequence SRVHRP. The chain crosses the membrane as a helical span at residues 108–132; that stretch reads RMIGCGAILVAVAGLLMALPHFISE. At 133–176 the chain is on the extracellular side; the sequence is PYRYDHSSPDRSQDFEASLCLPTTMAPASALSNDSCSSRTETKH. N165 carries N-linked (GlcNAc...) asparagine glycosylation. Residues 177 to 206 traverse the membrane as a helical segment; sequence LTMVGIMFTAQTLLGIGGVPIQPFGISYID. Residues 207 to 225 are Cytoplasmic-facing; it reads DFAHHSNSPLYLGILFAIT. Residues 226-246 traverse the membrane as a helical segment; it reads MMGPGLAYGLGSLMLRLYVDI. Residues 247–264 lie on the Extracellular side of the membrane; it reads DRMPEGGINLTTKDPRWV. A glycan (N-linked (GlcNAc...) asparagine) is linked at N255. The helical transmembrane segment at 265–289 threads the bilayer; that stretch reads GAWWLGFLISAGLVVLAASPYFFFP. Topologically, residues 290 to 354 are cytoplasmic; it reads REMPKEKYEL…IKVFPRVLLR (65 aa). A phosphoserine mark is found at S311 and S314. Residues 355–376 traverse the membrane as a helical segment; that stretch reads TLRHPIFLLVVLSQVCTSSMVA. Over 377 to 396 the chain is Extracellular; sequence GTATFLPKFLERQFSITASF. A helical transmembrane segment spans residues 397 to 420; sequence ANLLLGCLTIPLAIVGIVVGGVLV. The Cytoplasmic segment spans residues 421 to 424; it reads KRLH. The helical transmembrane segment at 425–448 threads the bilayer; sequence LSPMQCSALCLLGSLLCLLLSLPL. The Extracellular segment spans residues 449 to 552; that stretch reads FFIGCSTHHI…SACSRLVLPF (104 aa). Residues 471–531 enclose the Kazal-like domain; it reads PSLFPGCSEP…VFYTNCSCVA (61 aa). 3 disulfide bridges follow: C477/C508, C483/C504, and C492/C529. N-linked (GlcNAc...) asparagine glycans are attached at residues N526 and N533. Residues 553 to 575 traverse the membrane as a helical segment; it reads ILLISLGAAVASITHTPSFMLIL. At 576 to 584 the chain is on the cytoplasmic side; the sequence is RGVKKEDKT. A helical transmembrane segment spans residues 585 to 610; the sequence is LAVGMQFMLLRVLAWMPSPVIHGSAI. Residues 611-643 lie on the Extracellular side of the membrane; the sequence is DTTCVHWALTCGRRAVCRYYDHDLLRNRFIGLQ. Residues 644-661 form a helical membrane-spanning segment; it reads FFFKSGSLVCFALVLAIL. Topologically, residues 662 to 682 are cytoplasmic; it reads RQQSREASTKATVKSSDLQEL.

It belongs to the organo anion transporter (TC 2.A.60) family. As to expression, expressed in liver, kidney, heart, lung and retina. Widely distributed in all brain regions.

It localises to the cell membrane. The protein resides in the basal cell membrane. It is found in the apical cell membrane. It catalyses the reaction coproporphyrin III(out) = coproporphyrin III(in). It carries out the reaction substance P(out) = substance P(in). The enzyme catalyses taurocholate(out) = taurocholate(in). The catalysed reaction is prostaglandin E1(out) = prostaglandin E1(in). It catalyses the reaction prostaglandin E2(out) = prostaglandin E2(in). It carries out the reaction prostaglandin D2(out) = prostaglandin D2(in). The enzyme catalyses leukotriene C4(out) = leukotriene C4(in). The catalysed reaction is L-thyroxine(out) = L-thyroxine(in). Its function is as follows. Mediates the Na(+)-independent transport of organic anions such as taurocholate, the prostaglandins D2 (PGD2), E1 (PGE1) and E2 (PGE2), leukotriene C4, thromboxane B2 and L-thyroxine. Also plays a role in the reuptake of neuropeptides such as substance P/TAC1 and vasoactive intestinal peptide/VIP released from retinal neurons. May act as a heme transporter that promotes cellular iron availability. Also transports heme by-product coproporphyrin III (CPIII), and may be involved in their hepatic disposition. May contribute to regulate the transport of organic compounds in testis across the blood-testis-barrier. Shows a pH-sensitive substrate specificity which may be ascribed to the protonation state of the binding site and leads to a stimulation of substrate transport in an acidic microenvironment. The exact transport mechanism has not been yet deciphered but most likely involves an anion exchange, coupling the cellular uptake of organic substrate with the efflux of an anionic compound. Hydrogencarbonate/HCO3(-) acts as a probable counteranion that exchanges for organic anions. Cytoplasmic glutamate may also act as counteranion in the placenta. The chain is Solute carrier organic anion transporter family member 2B1 from Rattus norvegicus (Rat).